We begin with the raw amino-acid sequence, 506 residues long: Sodium-coupled neutral amino acid symporter 2 (506 aa).

The segment at 1–23 is disordered; sequence MKKAEMGRFNISPDEDSSSYSSN. Topologically, residues 1 to 76 are cytoplasmic; it reads MKKAEMGRFN…HPGTTSFGMS (76 aa). The regulates protein turnover upon amino acid deprivation stretch occupies residues 1–96; it reads MKKAEMGRFN…SGILGLSYAM (96 aa). A phosphoserine mark is found at serine 12, serine 21, serine 22, and serine 55. A helical membrane pass occupies residues 77 to 96; that stretch reads VFNLSNAIVGSGILGLSYAM. Asparagine 82 contributes to the Na(+) binding site. At 97 to 102 the chain is on the extracellular side; it reads ANTGIA. The helical transmembrane segment at 103–123 threads the bilayer; it reads LFIILLTFVSIFSLYSVHLLL. The Cytoplasmic portion of the chain corresponds to 124-158; sequence KTANEGGSLLYEQLGYKAFGLVGKLAASGSITMQN. Residues 159–177 form a helical membrane-spanning segment; that stretch reads IGAMSSYLFIVKYELPLVI. Over 178–188 the chain is Extracellular; the sequence is QALTNIEDKTG. A helical transmembrane segment spans residues 189-209; that stretch reads LWYLNGNYLVLLVSLVVILPL. The Cytoplasmic segment spans residues 210–217; the sequence is SLFRNLGY. Residues 218-238 traverse the membrane as a helical segment; the sequence is LGYTSGLSLLCMVFFLIVVIC. The Extracellular segment spans residues 239–292; the sequence is KKFQVPCPVEAALIINETINTTLTQPTALVPALSHNVTENDSCRPHYFIFNSQT. A disulfide bond links cysteine 245 and cysteine 281. Residues asparagine 258 and asparagine 274 are each glycosylated (N-linked (GlcNAc...) asparagine). Residues 293 to 313 traverse the membrane as a helical segment; the sequence is VYAVPILIFSFVCHPAVLPIY. At 314–329 the chain is on the cytoplasmic side; it reads EELKDRSRRRMMNVSK. A helical transmembrane segment spans residues 330–350; it reads ISFFAMFLMYLLAALFGYLTF. The Extracellular segment spans residues 351–371; that stretch reads YEHVESELLHTYSSILGTDIL. Residues 372-392 traverse the membrane as a helical segment; it reads LLIVRLAVLMAVTLTVPVVIF. Residue threonine 386 participates in Na(+) binding. Over 393-413 the chain is Cytoplasmic; the sequence is PIRSSVTHLLCASKDFSWWRH. A helical transmembrane segment spans residues 414-434; that stretch reads SLITVSILAFTNLLVIFVPTI. The Extracellular segment spans residues 435–436; that stretch reads RD. The chain crosses the membrane as a helical span at residues 437-457; sequence IFGFIGASAASMLIFILPSAF. Over 458–472 the chain is Cytoplasmic; sequence YIKLVKKEPMKSVQK. A helical membrane pass occupies residues 473–495; it reads IGALFFLLSGVLVMTGSMALIVL. The Extracellular segment spans residues 496-506; it reads DWVHNAPGGGH.

Belongs to the amino acid/polyamine transporter 2 family. In terms of processing, polyubiquitination by NEDD4L regulates the degradation and the activity of SLC38A2.

It is found in the cell membrane. The catalysed reaction is L-alanine(in) + Na(+)(in) = L-alanine(out) + Na(+)(out). It carries out the reaction glycine(in) + Na(+)(in) = glycine(out) + Na(+)(out). The enzyme catalyses L-serine(in) + Na(+)(in) = L-serine(out) + Na(+)(out). It catalyses the reaction L-proline(in) + Na(+)(in) = L-proline(out) + Na(+)(out). The catalysed reaction is L-methionine(in) + Na(+)(in) = L-methionine(out) + Na(+)(out). It carries out the reaction L-histidine(in) + Na(+)(in) = L-histidine(out) + Na(+)(out). The enzyme catalyses L-asparagine(in) + Na(+)(in) = L-asparagine(out) + Na(+)(out). It catalyses the reaction L-glutamine(in) + Na(+)(in) = L-glutamine(out) + Na(+)(out). The catalysed reaction is L-threonine(in) + Na(+)(in) = L-threonine(out) + Na(+)(out). It carries out the reaction L-leucine(in) + Na(+)(in) = L-leucine(out) + Na(+)(out). The enzyme catalyses L-phenylalanine(in) + Na(+)(in) = L-phenylalanine(out) + Na(+)(out). Inhibited by N-methyl-D-glucamine. Inhibited by choline. Allosteric regulation of sodium ions binding by pH. In terms of biological role, symporter that cotransports neutral amino acids and sodium ions from the extracellular to the intracellular side of the cell membrane. The transport is pH-sensitive, Li(+)-intolerant, electrogenic, driven by the Na(+) electrochemical gradient and cotransports of neutral amino acids and sodium ions with a stoichiometry of 1:1. May function in the transport of amino acids at the blood-brain barrier. May function in the transport of amino acids in the supply of maternal nutrients to the fetus through the placenta. Maintains a key metabolic glutamine/glutamate balance underpinning retrograde signaling by dendritic release of the neurotransmitter glutamate. Transports L-proline in differentiating osteoblasts for the efficient synthesis of proline-enriched proteins and provides proline essential for osteoblast differentiation and bone formation during bone development. This Pan paniscus (Pygmy chimpanzee) protein is Sodium-coupled neutral amino acid symporter 2.